The sequence spans 416 residues: Adipocyte plasma membrane-associated protein (416 aa).

Residues 1 to 39 (MNEPEGLRFRRLNRPQIITDELQEPQYKGTSTYSGKVFR) are Cytoplasmic-facing. Residues 40–60 (VILVTLGGCLILPLLVVFFLL) traverse the membrane as a helical segment. The Extracellular portion of the chain corresponds to 61–412 (ESPIHPELLS…FRSPYLCKLD (352 aa)). Asn160 is a glycosylation site (N-linked (GlcNAc...) asparagine).

This sequence belongs to the strictosidine synthase family.

It localises to the membrane. The protein is Adipocyte plasma membrane-associated protein (apmap) of Salmo salar (Atlantic salmon).